We begin with the raw amino-acid sequence, 487 residues long: Glycogen synthase 2 (487 aa).

Residue lysine 12 coordinates ADP-alpha-D-glucose.

The protein belongs to the glycosyltransferase 1 family. Bacterial/plant glycogen synthase subfamily.

It carries out the reaction [(1-&gt;4)-alpha-D-glucosyl](n) + ADP-alpha-D-glucose = [(1-&gt;4)-alpha-D-glucosyl](n+1) + ADP + H(+). Its pathway is glycan biosynthesis; glycogen biosynthesis. Functionally, synthesizes alpha-1,4-glucan chains using ADP-glucose. The protein is Glycogen synthase 2 of Methylococcus capsulatus (strain ATCC 33009 / NCIMB 11132 / Bath).